The chain runs to 352 residues: tRNA pseudouridine synthase D (352 aa).

Catalysis depends on Asp81, which acts as the Nucleophile. In terms of domain architecture, TRUD spans 157 to 303; sequence GIPNYFGAQR…MSHERRILRL (147 aa).

It belongs to the pseudouridine synthase TruD family.

It carries out the reaction uridine(13) in tRNA = pseudouridine(13) in tRNA. Functionally, responsible for synthesis of pseudouridine from uracil-13 in transfer RNAs. The polypeptide is tRNA pseudouridine synthase D (Pseudomonas fluorescens (strain Pf0-1)).